The following is a 388-amino-acid chain: Chitinase 4 (388 aa).

The 354-residue stretch at Phe22 to Val375 folds into the GH18 domain. Asn30 and Asn82 each carry an N-linked (GlcNAc...) asparagine glycan. Residues Asn82–Gln83 and Gly109–Gly112 each bind chitin. N-linked (GlcNAc...) asparagine glycosylation is found at Asn123 and Asn132. Residue Glu151 is the Proton donor of the active site. A chitin-binding site is contributed by Tyr152. N-linked (GlcNAc...) asparagine glycosylation is present at Asn155. Residue Met208–Asp211 participates in chitin binding. Asn237 carries an N-linked (GlcNAc...) asparagine glycan. Trp350 is a binding site for chitin.

Belongs to the glycosyl hydrolase 18 family. Chitinase class V subfamily.

The protein resides in the secreted. It carries out the reaction Random endo-hydrolysis of N-acetyl-beta-D-glucosaminide (1-&gt;4)-beta-linkages in chitin and chitodextrins.. Chitinase involved in the remodeling of chitin in the fungal cell wall. Plays a role in sporulation. The sequence is that of Chitinase 4 (CHT4) from Candida albicans (strain SC5314 / ATCC MYA-2876) (Yeast).